A 110-amino-acid chain; its full sequence is UPF0145 protein (110 aa).

This sequence belongs to the UPF0145 family.

The sequence is that of UPF0145 protein from Listeria ivanovii.